A 765-amino-acid chain; its full sequence is 1,4-alpha-glucan branching enzyme GlgB (765 aa).

The active-site Nucleophile is Asp431. Catalysis depends on Glu484, which acts as the Proton donor.

Belongs to the glycosyl hydrolase 13 family. GlgB subfamily. Monomer.

It carries out the reaction Transfers a segment of a (1-&gt;4)-alpha-D-glucan chain to a primary hydroxy group in a similar glucan chain.. It functions in the pathway glycan biosynthesis; glycogen biosynthesis. In terms of biological role, catalyzes the formation of the alpha-1,6-glucosidic linkages in glycogen by scission of a 1,4-alpha-linked oligosaccharide from growing alpha-1,4-glucan chains and the subsequent attachment of the oligosaccharide to the alpha-1,6 position. This is 1,4-alpha-glucan branching enzyme GlgB from Synechococcus sp. (strain CC9311).